A 316-amino-acid polypeptide reads, in one-letter code: Ribose-phosphate pyrophosphokinase (316 aa).

ATP contacts are provided by residues 41-43 and 100-101; these read DGE and RQ. Residues histidine 134 and aspartate 174 each coordinate Mg(2+). The active site involves lysine 197. Residues arginine 199, aspartate 223, and 227–231 each bind D-ribose 5-phosphate; that span reads DTAGT.

This sequence belongs to the ribose-phosphate pyrophosphokinase family. Class I subfamily. In terms of assembly, homohexamer. Mg(2+) is required as a cofactor.

It localises to the cytoplasm. It carries out the reaction D-ribose 5-phosphate + ATP = 5-phospho-alpha-D-ribose 1-diphosphate + AMP + H(+). It participates in metabolic intermediate biosynthesis; 5-phospho-alpha-D-ribose 1-diphosphate biosynthesis; 5-phospho-alpha-D-ribose 1-diphosphate from D-ribose 5-phosphate (route I): step 1/1. Involved in the biosynthesis of the central metabolite phospho-alpha-D-ribosyl-1-pyrophosphate (PRPP) via the transfer of pyrophosphoryl group from ATP to 1-hydroxyl of ribose-5-phosphate (Rib-5-P). In Caldanaerobacter subterraneus subsp. tengcongensis (strain DSM 15242 / JCM 11007 / NBRC 100824 / MB4) (Thermoanaerobacter tengcongensis), this protein is Ribose-phosphate pyrophosphokinase.